The sequence spans 298 residues: NFU1 iron-sulfur cluster scaffold homolog, mitochondrial (298 aa).

The tract at residues 190-258 is nifU; it reads IKELLDTRIR…IPEVESVEQV (69 aa). Residues Cys-227 and Cys-230 each coordinate [4Fe-4S] cluster. Residues 279 to 288 show a composition bias toward polar residues; that stretch reads QKESVNQPNA. Positions 279–298 are disordered; that stretch reads QKESVNQPNAPVNIGGGTPN.

The protein belongs to the NifU family.

Its subcellular location is the mitochondrion. Molecular scaffold for [Fe-S] cluster assembly of mitochondrial iron-sulfur proteins. The polypeptide is NFU1 iron-sulfur cluster scaffold homolog, mitochondrial (Drosophila virilis (Fruit fly)).